Consider the following 229-residue polypeptide: Heptaprenylglyceryl phosphate synthase (229 aa).

K12 lines the sn-glycerol 1-phosphate pocket. Residues D14 and S40 each contribute to the Mg(2+) site. Residues 159-164, G189, and 209-210 contribute to the sn-glycerol 1-phosphate site; these read YLEYSG and GN.

This sequence belongs to the GGGP/HepGP synthase family. Group I subfamily. Homodimer. The cofactor is Mg(2+).

It carries out the reaction sn-glycerol 1-phosphate + all-trans-heptaprenyl diphosphate = 3-heptaprenyl-sn-glycero-1-phosphate + diphosphate. It functions in the pathway membrane lipid metabolism; glycerophospholipid metabolism. Its function is as follows. Prenyltransferase that catalyzes in vivo the transfer of the heptaprenyl moiety of heptaprenyl pyrophosphate (HepPP; 35 carbon atoms) to the C3 hydroxyl of sn-glycerol-1-phosphate (G1P), producing heptaprenylglyceryl phosphate (HepGP). This reaction is an ether-bond-formation step in the biosynthesis of archaea-type G1P-based membrane lipids found in Bacillales. In Bacillus cereus (strain G9842), this protein is Heptaprenylglyceryl phosphate synthase.